Consider the following 432-residue polypeptide: Adenylosuccinate synthetase (432 aa).

Residues 12–18 and 40–42 contribute to the GTP site; these read GDEGKGK and GHT. Asp-13 (proton acceptor) is an active-site residue. Mg(2+)-binding residues include Asp-13 and Gly-40. IMP-binding positions include 13-16, 38-41, Thr-130, Arg-144, Gln-225, Thr-240, and Arg-304; these read DEGK and NAGH. His-41 acts as the Proton donor in catalysis. 300 to 306 is a substrate binding site; that stretch reads STTGRPR. GTP is bound by residues Arg-306, 332-334, and 414-416; these read KLD and SVG.

The protein belongs to the adenylosuccinate synthetase family. In terms of assembly, homodimer. It depends on Mg(2+) as a cofactor.

The protein resides in the cytoplasm. It carries out the reaction IMP + L-aspartate + GTP = N(6)-(1,2-dicarboxyethyl)-AMP + GDP + phosphate + 2 H(+). It participates in purine metabolism; AMP biosynthesis via de novo pathway; AMP from IMP: step 1/2. Functionally, plays an important role in the de novo pathway of purine nucleotide biosynthesis. Catalyzes the first committed step in the biosynthesis of AMP from IMP. This chain is Adenylosuccinate synthetase, found in Citrifermentans bemidjiense (strain ATCC BAA-1014 / DSM 16622 / JCM 12645 / Bem) (Geobacter bemidjiensis).